The sequence spans 600 residues: Beta-hexosaminidase (600 aa).

The first 18 residues, 1 to 18 (MRISQICTVLSTVTSAVA), serve as a signal peptide directing secretion. Positions 19-96 (VGVNPLPAPR…PFPTPTAGAS (78 aa)) are excised as a propeptide. The O-linked (Man...) threonine glycan is linked to Thr78. O-linked (Man...) serine glycans are attached at residues Ser83 and Ser84. Catalysis depends on charge relay system residues Asp222 and His275. Cys290 and Cys351 are joined by a disulfide. An N-linked (HexNAc...) asparagine glycan is attached at Asn318. The active-site Charge relay system is Glu346. Asn353 carries N-linked (GlcNAc...) asparagine glycosylation. A glycan (N-linked (HexNAc...) asparagine) is linked at Asn387. Residue Asn428 is glycosylated (N-linked (GlcNAc...) asparagine). Cys448 and Cys483 are joined by a disulfide. N-linked (GlcNAc...) asparagine glycans are attached at residues Asn500 and Asn525. Residues Cys583 and Cys590 are joined by a disulfide bond.

Belongs to the glycosyl hydrolase 20 family. Homodimer. Oligosaccharide moieties may also take part in the dimerization. Dimerization is a pH-dependent reversible process. The individual catalytic cores dimerize and the catalytic core of one subunit in the active dimer interacts with the propeptide of the second subunit. Post-translationally, the precursor of the propeptide is intracellularly processed in the endoplasmic reticulum by a dibasic peptidase, different from Kex2, removing Lys-97--Arg-101 from the precursor producing the activated propeptide. The propeptide binds non-covalently to the catalytic domain. Propeptide binding is necessary for full activation of the enzyme, dimerization of the catalytic domain and secretion of the active enzyme. In terms of processing, O-glycosylated. O-glycosylation (O-mannosylation) at the C-terminus of the propeptide is necessary for full enzyme activity. N-glycosylated. N-glycosylation of the catalytic domain increases the stability and solubility of the enzyme, especially at low pH. Contains high mannose-type (M4-M11) N-glycans at the C-terminus. N-glycan deglycosylation does not affect enzyme activity.

The protein resides in the secreted. The catalysed reaction is Hydrolysis of terminal non-reducing N-acetyl-D-hexosamine residues in N-acetyl-beta-D-hexosaminides.. Its activity is regulated as follows. Activated by non-covalent binding of the propeptide to the catalytic domain. The concentration of the propeptide is regulated in the endoplasmic reticulum and the propeptide thus regulates the amount of the active enzyme at various stages of the growth cycle. The dimeric enzyme has about half of the maximal activity in the presence of one bound propeptide, but is fully active with two bound O-glycosylated propeptides. Inhibited by N-acetylglucosamine (NAG)-thiazoline. Its function is as follows. Selectively hydrolyzes GlcNAcbeta(1-&gt;4)GlcNAc (N,N'-diacetylchitobiose) and Gal-NAcbeta(1-&gt;4)GlcNAc, but not their C-2 epimers GlcNAcbeta(1-&gt;4)ManNAc or Gal-NAcbeta(1-&gt;4)ManNAc. However, hydrolyzes both GlcNAcbeta(1-&gt;6)GlcNAc and GlcNAcbeta(1-&gt;6)ManNAc. Part of the binary chitinolytic system. Involved in hydrolysis of chitobiose and higher chito-oligomers (produced from cell wall chitin by endochitinases), thus contributing to the formation of germ tubes, fruit-bodies and septa during hyphenation. Hydrolyzes synthetic substrate p-nitrophenyl-beta-N-acetyl-D-glucosaminide (pNP-GlcNAc). Hydrolyzes synthetic substrate p-nitrophenyl-beta-N-acetyl-D-galactosaminide (pNP-GalNAc). Hydrolyzes chromogenic substrate 4-nitrophenyl-2-acetamido-2-deoxyglucopyranoside. This is Beta-hexosaminidase from Aspergillus oryzae (Yellow koji mold).